Consider the following 27-residue polypeptide: uncharacterized protein (27 aa).

It is found in the plastid. It localises to the chloroplast. This is an uncharacterized protein from Trieres chinensis (Marine centric diatom).